We begin with the raw amino-acid sequence, 427 residues long: Glutamate-1-semialdehyde 2,1-aminomutase (427 aa).

An N6-(pyridoxal phosphate)lysine modification is found at K265.

Belongs to the class-III pyridoxal-phosphate-dependent aminotransferase family. HemL subfamily. As to quaternary structure, homodimer. Pyridoxal 5'-phosphate serves as cofactor.

Its subcellular location is the cytoplasm. The catalysed reaction is (S)-4-amino-5-oxopentanoate = 5-aminolevulinate. It participates in porphyrin-containing compound metabolism; protoporphyrin-IX biosynthesis; 5-aminolevulinate from L-glutamyl-tRNA(Glu): step 2/2. In Pseudomonas putida (strain GB-1), this protein is Glutamate-1-semialdehyde 2,1-aminomutase.